Here is a 292-residue protein sequence, read N- to C-terminus: Phosphatidylserine decarboxylase proenzyme (292 aa).

Residues aspartate 92, histidine 149, and serine 256 each act as charge relay system; for autoendoproteolytic cleavage activity in the active site. The Schiff-base intermediate with substrate; via pyruvic acid; for decarboxylase activity role is filled by serine 256. At serine 256 the chain carries Pyruvic acid (Ser); by autocatalysis.

This sequence belongs to the phosphatidylserine decarboxylase family. PSD-B subfamily. Prokaryotic type I sub-subfamily. As to quaternary structure, heterodimer of a large membrane-associated beta subunit and a small pyruvoyl-containing alpha subunit. Requires pyruvate as cofactor. Is synthesized initially as an inactive proenzyme. Formation of the active enzyme involves a self-maturation process in which the active site pyruvoyl group is generated from an internal serine residue via an autocatalytic post-translational modification. Two non-identical subunits are generated from the proenzyme in this reaction, and the pyruvate is formed at the N-terminus of the alpha chain, which is derived from the carboxyl end of the proenzyme. The autoendoproteolytic cleavage occurs by a canonical serine protease mechanism, in which the side chain hydroxyl group of the serine supplies its oxygen atom to form the C-terminus of the beta chain, while the remainder of the serine residue undergoes an oxidative deamination to produce ammonia and the pyruvoyl prosthetic group on the alpha chain. During this reaction, the Ser that is part of the protease active site of the proenzyme becomes the pyruvoyl prosthetic group, which constitutes an essential element of the active site of the mature decarboxylase.

The protein resides in the cell membrane. It catalyses the reaction a 1,2-diacyl-sn-glycero-3-phospho-L-serine + H(+) = a 1,2-diacyl-sn-glycero-3-phosphoethanolamine + CO2. It participates in phospholipid metabolism; phosphatidylethanolamine biosynthesis; phosphatidylethanolamine from CDP-diacylglycerol: step 2/2. In terms of biological role, catalyzes the formation of phosphatidylethanolamine (PtdEtn) from phosphatidylserine (PtdSer). This chain is Phosphatidylserine decarboxylase proenzyme, found in Baumannia cicadellinicola subsp. Homalodisca coagulata.